The following is a 115-amino-acid chain: Peptidyl-tRNA hydrolase (115 aa).

It belongs to the PTH2 family.

Its subcellular location is the cytoplasm. It catalyses the reaction an N-acyl-L-alpha-aminoacyl-tRNA + H2O = an N-acyl-L-amino acid + a tRNA + H(+). The natural substrate for this enzyme may be peptidyl-tRNAs which drop off the ribosome during protein synthesis. The polypeptide is Peptidyl-tRNA hydrolase (Methanosarcina acetivorans (strain ATCC 35395 / DSM 2834 / JCM 12185 / C2A)).